We begin with the raw amino-acid sequence, 309 residues long: Homoserine O-succinyltransferase (309 aa).

Residue Cys-142 is the Acyl-thioester intermediate of the active site. 2 residues coordinate substrate: Lys-163 and Ser-192. The Proton acceptor role is filled by His-235. Residue Glu-237 is part of the active site. Arg-249 serves as a coordination point for substrate.

It belongs to the MetA family. As to quaternary structure, homodimer.

The protein localises to the cytoplasm. The catalysed reaction is L-homoserine + succinyl-CoA = O-succinyl-L-homoserine + CoA. It participates in amino-acid biosynthesis; L-methionine biosynthesis via de novo pathway; O-succinyl-L-homoserine from L-homoserine: step 1/1. Transfers a succinyl group from succinyl-CoA to L-homoserine, forming succinyl-L-homoserine. This is Homoserine O-succinyltransferase from Escherichia coli (strain K12 / MC4100 / BW2952).